A 203-amino-acid polypeptide reads, in one-letter code: Ribosome maturation factor RimP (203 aa).

Positions 1 to 21 (MSDSEATTSTDRSESNSTATI) are enriched in polar residues. Positions 1 to 23 (MSDSEATTSTDRSESNSTATIHN) are disordered.

It belongs to the RimP family.

The protein localises to the cytoplasm. Required for maturation of 30S ribosomal subunits. In Paenarthrobacter aurescens (strain TC1), this protein is Ribosome maturation factor RimP.